The primary structure comprises 411 residues: Small ribosomal subunit protein bS1c (411 aa).

The N-terminal 41 residues, 1–41, are a transit peptide targeting the chloroplast; sequence MASLAQQLAGGLRCPPLSNSNLSKPFSPKHTLKPRFSPIVS. 3 consecutive S1 motif domains span residues 96–166, 184–248, and 261–329; these read GSRV…LSLR, DVVV…MSNR, and GSVV…LSTK.

It belongs to the bacterial ribosomal protein bS1 family. As to quaternary structure, component of the chloroplast small ribosomal subunit (SSU). Mature 70S chloroplast ribosomes of higher plants consist of a small (30S) and a large (50S) subunit. The 30S small subunit contains 1 molecule of ribosomal RNA (16S rRNA) and 24 different proteins. The 50S large subunit contains 3 rRNA molecules (23S, 5S and 4.5S rRNA) and 33 different proteins.

Its subcellular location is the plastid. The protein resides in the chloroplast. Functionally, component of the chloroplast ribosome (chloro-ribosome), a dedicated translation machinery responsible for the synthesis of chloroplast genome-encoded proteins, including proteins of the transcription and translation machinery and components of the photosynthetic apparatus. Actively engaged in the initiation complex formation via a strong mRNA-binding activity. Possesses a poly(A)-binding activity which might play a role as a control element in chloroplast mRNA translation. The protein is Small ribosomal subunit protein bS1c (RPS1) of Spinacia oleracea (Spinach).